The chain runs to 372 residues: Aryl-hydrocarbon-interacting protein-like 1 (372 aa).

The PPIase FKBP-type domain maps to 53-145 (RQVDQPMHII…DLDELQKEPQ (93 aa)). 3 TPR repeats span residues 178–211 (VPVL…LRNL), 230–263 (NTLT…HPGI), and 264–297 (VKAY…EPSM). The tract at residues 315-372 (KQEEERLRCRNMLSQGATQPPTEPPAEPHTAPPAELSTGPPAEPPAELPLSPGHSLQH) is disordered. Residues 335-345 (PTEPPAEPHTA) are compositionally biased toward pro residues.

Interacts with NUB1.

It is found in the cytoplasm. It localises to the nucleus. Functionally, may be important in protein trafficking and/or protein folding and stabilization. This Papio cynocephalus (Yellow baboon) protein is Aryl-hydrocarbon-interacting protein-like 1 (AIPL1).